We begin with the raw amino-acid sequence, 512 residues long: Alpha-amylase (512 aa).

An N-terminal signal peptide occupies residues Met1 to Ala15. Disulfide bonds link Cys43–Cys101, Cys85–Cys130, and Cys156–Cys175. 3 residues coordinate Ca(2+): Asn115, Arg173, and Asp182. Position 210 (Arg210) interacts with chloride. Catalysis depends on Asp212, which acts as the Nucleophile. His216 is a Ca(2+) binding site. Catalysis depends on Glu248, which acts as the Proton donor. Residue Arg352 participates in chloride binding. 2 disulfide bridges follow: Cys394–Cys400 and Cys466–Cys478. Asn496 carries N-linked (GlcNAc...) asparagine glycosylation.

This sequence belongs to the glycosyl hydrolase 13 family. Ca(2+) serves as cofactor. Requires chloride as cofactor.

It localises to the secreted. The enzyme catalyses Endohydrolysis of (1-&gt;4)-alpha-D-glucosidic linkages in polysaccharides containing three or more (1-&gt;4)-alpha-linked D-glucose units.. In terms of biological role, catalyzes the hydrolysis of alpha-1,4 glycosidic linkages in starch, glycogen and similar oligosaccharides. The chain is Alpha-amylase from Oryzias latipes (Japanese rice fish).